Consider the following 319-residue polypeptide: tRNA N6-adenosine threonylcarbamoyltransferase (319 aa).

Positions 110 and 114 each coordinate Fe cation. Residues 132–136, Asp-165, Gly-178, Asp-182, and Asn-271 each bind substrate; that span reads VVSGG. Asp-300 provides a ligand contact to Fe cation.

Belongs to the KAE1 / TsaD family. Fe(2+) is required as a cofactor.

The protein localises to the cytoplasm. It carries out the reaction L-threonylcarbamoyladenylate + adenosine(37) in tRNA = N(6)-L-threonylcarbamoyladenosine(37) in tRNA + AMP + H(+). In terms of biological role, required for the formation of a threonylcarbamoyl group on adenosine at position 37 (t(6)A37) in tRNAs that read codons beginning with adenine. Is involved in the transfer of the threonylcarbamoyl moiety of threonylcarbamoyl-AMP (TC-AMP) to the N6 group of A37, together with TsaE and TsaB. TsaD likely plays a direct catalytic role in this reaction. The polypeptide is tRNA N6-adenosine threonylcarbamoyltransferase (Mycoplasma capricolum subsp. capricolum (strain California kid / ATCC 27343 / NCTC 10154)).